The following is a 103-amino-acid chain: Co-chaperonin GroES (103 aa).

The protein belongs to the GroES chaperonin family. Heptamer of 7 subunits arranged in a ring. Interacts with the chaperonin GroEL.

It is found in the cytoplasm. In terms of biological role, together with the chaperonin GroEL, plays an essential role in assisting protein folding. The GroEL-GroES system forms a nano-cage that allows encapsulation of the non-native substrate proteins and provides a physical environment optimized to promote and accelerate protein folding. GroES binds to the apical surface of the GroEL ring, thereby capping the opening of the GroEL channel. This is Co-chaperonin GroES from Synechococcus sp. (strain CC9311).